We begin with the raw amino-acid sequence, 754 residues long: Cytosolic neutral trehalase (754 aa).

The segment covering 1-10 (MDGKVNNNPP) has biased composition (polar residues). Disordered stretches follow at residues 1-47 (MDGK…LSKN) and 54-73 (TFSV…YTSP). Residues Asp117, Asp119, Asn121, Gln123, and Asp128 each contribute to the Ca(2+) site. Residues Arg305, 312-313 (WD), Asn349, 358-360 (RSQ), Glu427, Arg476, and Gly479 each bind substrate. Catalysis depends on proton donor/acceptor residues Asp481 and Glu676.

The protein belongs to the glycosyl hydrolase 37 family. The cofactor is Ca(2+).

It localises to the cytoplasm. It catalyses the reaction alpha,alpha-trehalose + H2O = alpha-D-glucose + beta-D-glucose. It functions in the pathway carbohydrate degradation. Functionally, hydrolyzes intracellular trehalose to glucose. The disaccharide trehalose serves as a storage molecule for energy and carbohydrates that is mobilized during nutrient stress. This is Cytosolic neutral trehalase from Kluyveromyces lactis (strain ATCC 8585 / CBS 2359 / DSM 70799 / NBRC 1267 / NRRL Y-1140 / WM37) (Yeast).